The chain runs to 652 residues: Acetyl-coenzyme A synthetase (652 aa).

CoA contacts are provided by residues 191–194 (RAGR), Thr311, and Asn335. ATP contacts are provided by residues 387 to 389 (GEP), 411 to 416 (DTWWQT), Asp500, and Arg515. Ser523 contributes to the CoA binding site. Arg526 lines the ATP pocket. Mg(2+) is bound by residues Val537, His539, and Ile542. Arg584 is a CoA binding site. N6-acetyllysine is present on Lys609.

It belongs to the ATP-dependent AMP-binding enzyme family. Requires Mg(2+) as cofactor. Acetylated. Deacetylation by the SIR2-homolog deacetylase activates the enzyme.

It carries out the reaction acetate + ATP + CoA = acetyl-CoA + AMP + diphosphate. Catalyzes the conversion of acetate into acetyl-CoA (AcCoA), an essential intermediate at the junction of anabolic and catabolic pathways. Acs undergoes a two-step reaction. In the first half reaction, Acs combines acetate with ATP to form acetyl-adenylate (AcAMP) intermediate. In the second half reaction, it can then transfer the acetyl group from AcAMP to the sulfhydryl group of CoA, forming the product AcCoA. In terms of biological role, enables the cell to use acetate during aerobic growth to generate energy via the TCA cycle, and biosynthetic compounds via the glyoxylate shunt. Acetylates CheY, the response regulator involved in flagellar movement and chemotaxis. The protein is Acetyl-coenzyme A synthetase of Serratia proteamaculans (strain 568).